The primary structure comprises 1479 residues: DNA-directed RNA polymerase subunit beta'' (1479 aa).

Cys220, Cys296, Cys303, and Cys306 together coordinate Zn(2+). 2 disordered regions span residues 618–640 and 663–756; these read TRAE…REDE and LEDE…KKEG. 3 stretches are compositionally biased toward acidic residues: residues 622 to 631, 704 to 717, and 731 to 749; these read DSEEEYETLE, DEYG…EDEY, and LEED…PEED.

The protein belongs to the RNA polymerase beta' chain family. RpoC2 subfamily. In terms of assembly, in plastids the minimal PEP RNA polymerase catalytic core is composed of four subunits: alpha, beta, beta', and beta''. When a (nuclear-encoded) sigma factor is associated with the core the holoenzyme is formed, which can initiate transcription. The cofactor is Zn(2+).

Its subcellular location is the plastid. It is found in the chloroplast. The catalysed reaction is RNA(n) + a ribonucleoside 5'-triphosphate = RNA(n+1) + diphosphate. In terms of biological role, DNA-dependent RNA polymerase catalyzes the transcription of DNA into RNA using the four ribonucleoside triphosphates as substrates. The chain is DNA-directed RNA polymerase subunit beta'' from Triticum aestivum (Wheat).